The primary structure comprises 283 residues: tRNA pseudouridine synthase A (283 aa).

The Nucleophile role is filled by aspartate 73. The interval 120–124 is RNA binding; the sequence is FHARF. Substrate is bound at residue tyrosine 131. Residues 181-185 form an interaction with tRNA region; the sequence is QCQSR.

This sequence belongs to the tRNA pseudouridine synthase TruA family. In terms of assembly, homodimer.

The enzyme catalyses uridine(38/39/40) in tRNA = pseudouridine(38/39/40) in tRNA. Its function is as follows. Formation of pseudouridine at positions 38, 39 and 40 in the anticodon stem and loop of transfer RNAs. The polypeptide is tRNA pseudouridine synthase A (Pectobacterium atrosepticum (strain SCRI 1043 / ATCC BAA-672) (Erwinia carotovora subsp. atroseptica)).